The following is a 510-amino-acid chain: ATP synthase subunit alpha (510 aa).

170–177 (GDRQTGKT) provides a ligand contact to ATP.

It belongs to the ATPase alpha/beta chains family. As to quaternary structure, F-type ATPases have 2 components, CF(1) - the catalytic core - and CF(0) - the membrane proton channel. CF(1) has five subunits: alpha(3), beta(3), gamma(1), delta(1), epsilon(1). CF(0) has three main subunits: a(1), b(2) and c(9-12). The alpha and beta chains form an alternating ring which encloses part of the gamma chain. CF(1) is attached to CF(0) by a central stalk formed by the gamma and epsilon chains, while a peripheral stalk is formed by the delta and b chains.

Its subcellular location is the cell inner membrane. The catalysed reaction is ATP + H2O + 4 H(+)(in) = ADP + phosphate + 5 H(+)(out). Functionally, produces ATP from ADP in the presence of a proton gradient across the membrane. The alpha chain is a regulatory subunit. The protein is ATP synthase subunit alpha of Dictyoglomus thermophilum (strain ATCC 35947 / DSM 3960 / H-6-12).